A 101-amino-acid polypeptide reads, in one-letter code: Small ribosomal subunit protein uS14 (101 aa).

The interval 1-20 (MAKTSAVNRNKMRERMASRD) is disordered. A compositionally biased stretch (basic and acidic residues) spans 11 to 20 (KMRERMASRD).

It belongs to the universal ribosomal protein uS14 family. Part of the 30S ribosomal subunit. Contacts proteins S3 and S10.

Its function is as follows. Binds 16S rRNA, required for the assembly of 30S particles and may also be responsible for determining the conformation of the 16S rRNA at the A site. The polypeptide is Small ribosomal subunit protein uS14 (Granulibacter bethesdensis (strain ATCC BAA-1260 / CGDNIH1)).